The chain runs to 191 residues: MKKQLLSALIGASLLAPMAASAADYVIDREGAHASITFKVSHLGYSYVVGRFNDFSGDFSYDAAKPTAAKVNVTVNTLSVDSNHAERDKHIRSADFLNTSKFAQATFTSTTVEDKGNGDLVINGNLTLNGVTKPLAINAHAVGEGQDPWGGYRAGFTGTTTFAMKDFGIKMDLGPASSHVELDLVVEGVRK.

The signal sequence occupies residues 1–22 (MKKQLLSALIGASLLAPMAASA).

Belongs to the UPF0312 family. Type 1 subfamily.

Its subcellular location is the periplasm. The chain is UPF0312 protein Shew185_3055 from Shewanella baltica (strain OS185).